The primary structure comprises 118 residues: Acidic elicitin A1 (118 aa).

An N-terminal signal peptide occupies residues M1 to A20. Cystine bridges form between C23–C91, C47–C76, and C71–C115.

This sequence belongs to the elicitin family.

The protein localises to the secreted. In terms of biological role, induces local and distal defense responses (incompatible hypersensitive reaction) in plants from the solanaceae and cruciferae families. Elicits leaf necrosis and causes the accumulation of pathogenesis-related proteins. Might interact with the lipidic molecules of the plasma membrane. The sequence is that of Acidic elicitin A1 (B14) from Phytophthora cryptogea.